Here is a 214-residue protein sequence, read N- to C-terminus: NADH-quinone oxidoreductase subunit C (214 aa).

This sequence belongs to the complex I 30 kDa subunit family. In terms of assembly, NDH-1 is composed of 14 different subunits. Subunits NuoB, C, D, E, F, and G constitute the peripheral sector of the complex.

It is found in the cell inner membrane. The enzyme catalyses a quinone + NADH + 5 H(+)(in) = a quinol + NAD(+) + 4 H(+)(out). In terms of biological role, NDH-1 shuttles electrons from NADH, via FMN and iron-sulfur (Fe-S) centers, to quinones in the respiratory chain. The immediate electron acceptor for the enzyme in this species is believed to be ubiquinone. Couples the redox reaction to proton translocation (for every two electrons transferred, four hydrogen ions are translocated across the cytoplasmic membrane), and thus conserves the redox energy in a proton gradient. The chain is NADH-quinone oxidoreductase subunit C from Francisella tularensis subsp. tularensis (strain WY96-3418).